We begin with the raw amino-acid sequence, 205 residues long: Homeobox protein goosecoid-2 (205 aa).

2 disordered regions span residues 33-58 (SLPA…EPGA) and 185-205 (KRAS…KGSC). Positions 126-185 (TRRHRTIFSEEQLQALEALFVQNQYPDVSTRERLAGRIRLREERVEVWFKNRRAKWRHQK) form a DNA-binding region, homeobox.

The protein belongs to the paired homeobox family. Bicoid subfamily. As to expression, detected in adult testis and pituitary, and in 9-10 week fetal tissue (thorax). Probably expressed in other tissues at low levels.

It localises to the nucleus. Its function is as follows. May have a role in development. May regulate its own transcription. May bind the bicoid consensus sequence TAATCC. This is Homeobox protein goosecoid-2 (GSC2) from Homo sapiens (Human).